Here is a 478-residue protein sequence, read N- to C-terminus: 5-hydroxytryptamine receptor 3A (478 aa).

The signal sequence occupies residues 1-23 (MLLWVQQALLALLLPTLLAQGEA). At 24–241 (RRSRNTTRPA…MKFYVVIRRR (218 aa)) the chain is on the extracellular side. N-linked (GlcNAc...) asparagine glycosylation is found at asparagine 28, asparagine 104, asparagine 170, and asparagine 186. An intrachain disulfide couples cysteine 157 to cysteine 171. Residues 242–268 (PLFYVVSLLLPSIFLMVMDIVGFYLPP) form a helical membrane-spanning segment. The Cytoplasmic segment spans residues 269-273 (NSGER). The chain crosses the membrane as a helical span at residues 274–292 (VSFKITLLLGYSVFLIIVS). Over 293 to 302 (DTLPATAIGT) the chain is Extracellular. A helical membrane pass occupies residues 303 to 321 (PLIGVYFVVCMALLVISLA). Over 322-455 (ETIFIVRLVH…GSVLDKLLFH (134 aa)) the chain is Cytoplasmic. The tract at residues 389–408 (GGPQDFEKSPRDRCSPPPPP) is disordered. Residues 393-402 (DFEKSPRDRC) show a composition bias toward basic and acidic residues. The HA-stretch; determines single-channel conductance in 5-HT3 receptors stretch occupies residues 414-450 (AVCGLLQELSSIRQFLEKRDEIREVARDWLRVGSVLD). The chain crosses the membrane as a helical span at residues 456-475 (IYLLAVLAYSITLVMLWSIW). The Extracellular portion of the chain corresponds to 476–478 (QYA).

The protein belongs to the ligand-gated ion channel (TC 1.A.9) family. 5-hydroxytryptamine receptor (TC 1.A.9.2) subfamily. HTR3A sub-subfamily. In terms of assembly, forms homopentameric as well as heteropentameric serotonin-activated cation-selective channel complexes with HTR3B or HTR3C or HTR3D or HTR3E. The homomeric complex is functional but exhibits low conductance with modified voltage dependence, and decreased agonist and antagonist affinity. Heteropentameric complexes display properties which resemble that of neuronal serotonin-activated channels in vivo. Interacts with RIC3. In terms of tissue distribution, expressed in cerebral cortex, amygdala, hippocampus, and testis. Detected in monocytes of the spleen and tonsil, in small and large intestine, uterus, prostate, ovary and placenta.

Its subcellular location is the postsynaptic cell membrane. The protein localises to the cell membrane. It catalyses the reaction Na(+)(in) = Na(+)(out). The enzyme catalyses K(+)(in) = K(+)(out). It carries out the reaction Ca(2+)(in) = Ca(2+)(out). The catalysed reaction is Mg(2+)(in) = Mg(2+)(out). In terms of biological role, forms serotonin (5-hydroxytryptamine/5-HT3)-activated cation-selective channel complexes, which when activated cause fast, depolarizing responses in neurons. The polypeptide is 5-hydroxytryptamine receptor 3A (Homo sapiens (Human)).